The sequence spans 196 residues: MSPQIDAVILAGGMARRMGGNDKGLVELNDQPMIKHAIDRIKPQVKQILINANRNQNRYAEFGYPVLSDEDSGYLGPLAGMITAMGQTQADYLLVVPCDCPLLPTDLVQRMLAAITAEDAEMAVASDGKREQPVVLLMKPALRGSMKAFLDAGERKIDFWYAKHHCVVCDFSDQPNAFVNVNTPEQKQQLSEAIAH.

Residues 10–12 (LAG), Lys23, Asn51, Asp69, and Asp99 contribute to the GTP site. Asp99 provides a ligand contact to Mg(2+).

This sequence belongs to the MobA family. Monomer. Mg(2+) serves as cofactor.

It localises to the cytoplasm. The enzyme catalyses Mo-molybdopterin + GTP + H(+) = Mo-molybdopterin guanine dinucleotide + diphosphate. Its function is as follows. Transfers a GMP moiety from GTP to Mo-molybdopterin (Mo-MPT) cofactor (Moco or molybdenum cofactor) to form Mo-molybdopterin guanine dinucleotide (Mo-MGD) cofactor. The protein is Molybdenum cofactor guanylyltransferase of Shewanella loihica (strain ATCC BAA-1088 / PV-4).